The primary structure comprises 885 residues: MTTLSPEAFAGHTPMMQQYLRIKADHPDTLVFYRMGDFYELFFEDAEKAARLLDLTLTQRGASAGTPIKMAGVPHHAVEQYLAKLVKMGESVAICEQIGDPATSKGPVERKVVRVVTPGTLTDAALLSDKNDVYLLAMCTGHNKRGVAVNIGLAWLNLASGALRLAEIEPDQLAAALERIRPAEILTPDGATDAIPAGAGASKRVPAWHFDIASGTQRLCDQLDVASLDGFGAHSLTSACGAAGALLLYAAATQGQQLRHVRSLKVENETEYIGLDPATRRNLELTETLRGTESPTLYSLLDTCCTTMGSRLLRHWLHHPPRASVAAQSRQQAIGALLDAPANASLDALRSALRQIADVERITGRLALLSARPRDLSSLRDTFAALPALRERIGAIVANADALARVDAALAPPAECLDLLTSAIAPEPAAMVRDGGVIARGYDAELDELRDISENCGQFLIDLEARERARTGIANLRVEYNKVHGFYIEVTRGQTDKVPDDYRRRQTLKNAERYITPELKTFEDKALSAQERALARERALYDSVLQALLPFIPECQRVASALAELDLLAAFAERARALDWVAPTFTDEIGIEIEQGRHPVVEAQVEQFIANDCRFGTERKLLLITGPNMGGKSTFMRQTALIALMAYVGSYVPAKSACFGPIDRIFTRIGAADDLAGGRSTFMVEMTEAAAILNDATPQSLVLMDEIGRGTSTFDGLALAWAIARHLLAHNACYTLFATHYFELTQLPAEFPQAANVHLSAVEHGHGIVFLHAVNEGPANQSYGLQVAQLAGVPAPVIRAARKHLAYLEQQSASQHTPQLDLFSAPPAAVDDLECADAPALPDTPHPALEKLRDIDPDDLKPREALDLLYELRTLVRSHDADGHA.

626-633 (GPNMGGKS) lines the ATP pocket.

It belongs to the DNA mismatch repair MutS family.

This protein is involved in the repair of mismatches in DNA. It is possible that it carries out the mismatch recognition step. This protein has a weak ATPase activity. The polypeptide is DNA mismatch repair protein MutS (Burkholderia cenocepacia (strain HI2424)).